Here is a 436-residue protein sequence, read N- to C-terminus: MSTNLVDYVDDSYLNQSMNSENGLDSVTQIMYDMKKYNIVNDVLPPPNHEDLHVVIMAVSYLLLFLLGTCGNVAVLTTIYHVIRSSRATLDNTLIYVIVLSCVDFGVCLSLPITVIDQILGFWMFGKIPCKLHAVFENFGKILSALILTAMSFDRYAGVCHPQRKRLRSRNFAITILLVLAVYAFITLCPLLWSFTAREIILYAKETAPGMLTRMKIEKCTVDIDSQMFTAFTIYQFILCYCTPLVLIAFFYTKLLSKLREHTRTFKSSQIPFLHISLYTLAVACFYFLCWTPFWMATLFAVYLENSANSSSVPPVFVYIMYFIHALPFTNSAINWILYGALNGQLQQRYRSNRSNSTKKTTTTTASTALLEKKITNLNTNSNYQVNGSMNSIATAAPTKTIGNNEVLVATSTIDDDVATDVVDVRLLSNHNPTFL.

The Extracellular segment spans residues 1–53 (MSTNLVDYVDDSYLNQSMNSENGLDSVTQIMYDMKKYNIVNDVLPPPNHEDLH). A glycan (N-linked (GlcNAc...) asparagine) is linked at Asn15. Residues 54 to 74 (VVIMAVSYLLLFLLGTCGNVA) form a helical membrane-spanning segment. Topologically, residues 75–94 (VLTTIYHVIRSSRATLDNTL) are cytoplasmic. Residues 95–115 (IYVIVLSCVDFGVCLSLPITV) form a helical membrane-spanning segment. Topologically, residues 116–132 (IDQILGFWMFGKIPCKL) are extracellular. A helical transmembrane segment spans residues 133 to 153 (HAVFENFGKILSALILTAMSF). Topologically, residues 154–171 (DRYAGVCHPQRKRLRSRN) are cytoplasmic. Residues 172–192 (FAITILLVLAVYAFITLCPLL) traverse the membrane as a helical segment. At 193 to 230 (WSFTAREIILYAKETAPGMLTRMKIEKCTVDIDSQMFT) the chain is on the extracellular side. A helical membrane pass occupies residues 231 to 251 (AFTIYQFILCYCTPLVLIAFF). Topologically, residues 252–281 (YTKLLSKLREHTRTFKSSQIPFLHISLYTL) are cytoplasmic. Residues 282–302 (AVACFYFLCWTPFWMATLFAV) traverse the membrane as a helical segment. Residues 303 to 316 (YLENSANSSSVPPV) are Extracellular-facing. Asn309 carries an N-linked (GlcNAc...) asparagine glycan. A helical membrane pass occupies residues 317–337 (FVYIMYFIHALPFTNSAINWI). Topologically, residues 338-436 (LYGALNGQLQ…LLSNHNPTFL (99 aa)) are cytoplasmic.

The protein belongs to the G-protein coupled receptor 1 family.

Its subcellular location is the cell membrane. Putative receptor. This chain is Probable G-protein coupled receptor C06G4.5, found in Caenorhabditis elegans.